A 97-amino-acid polypeptide reads, in one-letter code: Defensin-like protein 196 (97 aa).

Positions 1 to 28 are cleaved as a signal peptide; that stretch reads MAKMSALSIFAIFIILVLVIFEIPEIEA. Cystine bridges form between C33–C85, C46–C70, C55–C80, and C59–C82.

Belongs to the DEFL family. Protease inhibitor I18 (RTI/MTI-2) subfamily.

The protein resides in the secreted. The protein is Defensin-like protein 196 (ATTI4) of Arabidopsis thaliana (Mouse-ear cress).